The primary structure comprises 207 residues: Large ribosomal subunit protein bL25 (207 aa).

Positions D185–S207 are disordered.

Belongs to the bacterial ribosomal protein bL25 family. CTC subfamily. As to quaternary structure, part of the 50S ribosomal subunit; part of the 5S rRNA/L5/L18/L25 subcomplex. Contacts the 5S rRNA. Binds to the 5S rRNA independently of L5 and L18.

This is one of the proteins that binds to the 5S RNA in the ribosome where it forms part of the central protuberance. This is Large ribosomal subunit protein bL25 from Rhodococcus jostii (strain RHA1).